The following is a 226-amino-acid chain: Ribose-5-phosphate isomerase A (226 aa).

Substrate contacts are provided by residues 28–31, 83–86, and 97–100; these read TGST, DGAD, and KGGG. Catalysis depends on Glu106, which acts as the Proton acceptor. Lys124 lines the substrate pocket.

This sequence belongs to the ribose 5-phosphate isomerase family. Homotetramer.

The enzyme catalyses aldehydo-D-ribose 5-phosphate = D-ribulose 5-phosphate. It participates in carbohydrate biosynthesis; D-ribose 5-phosphate biosynthesis. Functionally, catalyzes the reversible conversion of ribose-5-phosphate to ribulose 5-phosphate. The polypeptide is Ribose-5-phosphate isomerase A (Methanocaldococcus jannaschii (strain ATCC 43067 / DSM 2661 / JAL-1 / JCM 10045 / NBRC 100440) (Methanococcus jannaschii)).